Here is a 153-residue protein sequence, read N- to C-terminus: MSLELALDVQYATTSDWLPTEEQLMLWAKTAIGNGMDRAELTIRIVDSRESQMLNSTYRGKDKPTNVLSFPFEAPAEIELPLLGDLVICAAVVENEAREQNKTLEAHWAHMVVHGCLHLLGYDHIEDEEAEEMESLETQLIESLGFTNPYKEQ.

Positions 114, 118, and 124 each coordinate Zn(2+).

It belongs to the endoribonuclease YbeY family. The cofactor is Zn(2+).

The protein localises to the cytoplasm. Single strand-specific metallo-endoribonuclease involved in late-stage 70S ribosome quality control and in maturation of the 3' terminus of the 16S rRNA. The protein is Endoribonuclease YbeY of Shewanella putrefaciens (strain CN-32 / ATCC BAA-453).